Reading from the N-terminus, the 357-residue chain is Acyl-coenzyme A diphosphatase NUDT19 (357 aa).

One can recognise a Nudix hydrolase domain in the interval 10 to 242 (AATVMLAAGW…IWLAPPQFYE (233 aa)). The interval 72 to 94 (PRFGLGPEPPRQPPFPGLSHGDA) is disordered. A compositionally biased stretch (pro residues) spans 78–87 (PEPPRQPPFP). A Nudix box motif is present at residues 97-118 (AALPDDVALRICAIRETFEEAG). Residues glutamate 112 and glutamate 116 each contribute to the Mg(2+) site. Lysine 300 is subject to N6-succinyllysine. The short motif at 355 to 357 (AHL) is the Microbody targeting signal element.

Belongs to the Nudix hydrolase family. Monomer. Mg(2+) serves as cofactor. Requires Mn(2+) as cofactor.

The protein localises to the peroxisome. It carries out the reaction an acyl-CoA + H2O = an acyl-4'-phosphopantetheine + adenosine 3',5'-bisphosphate + 2 H(+). The catalysed reaction is CoA + H2O = (R)-4'-phosphopantetheine + adenosine 3',5'-bisphosphate + 2 H(+). It catalyses the reaction hexanoyl-CoA + H2O = hexanoyl-4'-phosphopantetheine + adenosine 3',5'-bisphosphate + 2 H(+). The enzyme catalyses octanoyl-CoA + H2O = S-octanoyl-4'-phosphopantetheine + adenosine 3',5'-bisphosphate + 2 H(+). It carries out the reaction butanoyl-CoA + H2O = S-butanoyl-4'-phosphopantetheine + adenosine 3',5'-bisphosphate + 2 H(+). The catalysed reaction is propanoyl-CoA + H2O = propanoyl-4'-phosphopantetheine + adenosine 3',5'-bisphosphate + 2 H(+). It catalyses the reaction malonyl-CoA + H2O = malonyl-4'-phosphopantetheine + adenosine 3',5'-bisphosphate + 2 H(+). The enzyme catalyses succinyl-CoA + H2O = succinyl-4'-phosphopantetheine + adenosine 3',5'-bisphosphate + 2 H(+). It carries out the reaction choloyl-CoA + H2O = S-choloyl-4'-phosphopantetheine + adenosine 3',5'-bisphosphate + 2 H(+). The catalysed reaction is 4,8-dimethylnonanoyl-CoA + H2O = S-(4,8-dimethylnonanoyl)-4'-phosphopantetheine + adenosine 3',5'-bisphosphate + 2 H(+). It catalyses the reaction (9Z,12Z,15Z)-octadecatrienoyl-CoA + H2O = S-(9Z,12Z,15Z-octadecatrienoyl)-4'-phosphopantetheine + adenosine 3',5'-bisphosphate + 2 H(+). The enzyme catalyses (9Z,12Z)-octadecadienoyl-CoA + H2O = S-(9Z,12Z-octadecadienoyl)-4'-phosphopantetheine + adenosine 3',5'-bisphosphate + 2 H(+). It carries out the reaction (9Z)-hexadecenoyl-CoA + H2O = S-(9Z-hexadecenoyl)-4'-phosphopantetheine + adenosine 3',5'-bisphosphate + 2 H(+). The catalysed reaction is (9Z)-tetradecenoyl-CoA + H2O = S-(9Z-tetradecenoyl)-4'-phosphopantetheine + adenosine 3',5'-bisphosphate + 2 H(+). It catalyses the reaction (6Z)-octenoyl-CoA + H2O = S-(6Z-octenoyl)-4'-phosphopantetheine + adenosine 3',5'-bisphosphate + 2 H(+). The enzyme catalyses hexadecanoyl-CoA + H2O = S-hexadecanoyl-4'-phosphopantetheine + adenosine 3',5'-bisphosphate + 2 H(+). It carries out the reaction tetradecanoyl-CoA + H2O = tetradecanoyl-4'-phosphopantetheine + adenosine 3',5'-bisphosphate + 2 H(+). The catalysed reaction is dodecanoyl-CoA + H2O = S-dodecanoyl-4'-phosphopantetheine + adenosine 3',5'-bisphosphate + 2 H(+). It catalyses the reaction a 5'-end CoA-ribonucleoside in mRNA + H2O = a 5'-end phospho-adenosine-phospho-ribonucleoside in mRNA + (R)-4'-phosphopantetheine + 2 H(+). Its function is as follows. Fatty acyl-coenzyme A (CoA) diphosphatase that hydrolyzes fatty acyl-CoA to yield acyl-4'-phosphopantetheine and adenosine 3',5'-bisphosphate. Mediates the hydrolysis of a wide range of CoA esters, including choloyl-CoA and branched-chain fatty-acyl-CoA esters and at low substrate concentrations medium and long-chain fatty-acyl-CoA esters are the primary substrates. Highest activity seen with medium-chain acyl-CoA esters and higher rates of activity seen with the unsaturated acyl-CoA esters compared with the saturated esters. Exhibits decapping activity towards dpCoA-capped RNAs in vitro. This chain is Acyl-coenzyme A diphosphatase NUDT19 (Nudt19), found in Mus caroli (Ryukyu mouse).